A 95-amino-acid chain; its full sequence is NELL2-interacting cell ontogeny regulator 1 (95 aa).

The first 34 residues, 1–34 (MAPPPACRSPMSPPPPPLLLLLLSLALLGARARA), serve as a signal peptide directing secretion.

This sequence belongs to the NICOL family. In terms of assembly, interacts with NELL2; triggers epididymal differentiation. Interacts with cell surface receptor TFRC; the interaction mediates uptake of NICOL1 into fibroblasts. Detected in the brain (at protein level). Also expressed at low levels in the kidney, primarily in tubular epithelial cells.

It is found in the secreted. It localises to the cytoplasm. The protein localises to the perinuclear region. In terms of biological role, mRNA-binding protein which interacts with a range of target mRNAs including SERPINE1, ACTA2, CCN2 and COL4A1 and may promote extracellular matrix production. Binds to the 3'-UTR of SERPINE1 mRNA and stabilizes the mRNA, possibly by competing for binding with SERBP1 and preventing SERBP1-mediated mRNA degradation. Also binds to the 3'-UTR of ACTA2. Testis-derived lumicrine factor that triggers epididymal differentiation and sperm maturation. The chain is NELL2-interacting cell ontogeny regulator 1 from Homo sapiens (Human).